The primary structure comprises 134 residues: NADH-quinone oxidoreductase subunit A (134 aa).

3 helical membrane passes run phenylalanine 12–leucine 32, phenylalanine 64–tryptophan 84, and tryptophan 93–leucine 113.

It belongs to the complex I subunit 3 family. NDH-1 is composed of 14 different subunits. Subunits NuoA, H, J, K, L, M, N constitute the membrane sector of the complex.

The protein resides in the cell inner membrane. It catalyses the reaction a quinone + NADH + 5 H(+)(in) = a quinol + NAD(+) + 4 H(+)(out). Functionally, NDH-1 shuttles electrons from NADH, via FMN and iron-sulfur (Fe-S) centers, to quinones in the respiratory chain. The immediate electron acceptor for the enzyme in this species is believed to be ubiquinone. Couples the redox reaction to proton translocation (for every two electrons transferred, four hydrogen ions are translocated across the cytoplasmic membrane), and thus conserves the redox energy in a proton gradient. The protein is NADH-quinone oxidoreductase subunit A of Aeromonas salmonicida (strain A449).